Consider the following 144-residue polypeptide: Mediator of RNA polymerase II transcription subunit 21 (144 aa).

It belongs to the Mediator complex subunit 21 family. Component of the Mediator complex, which is composed of MED1, MED4, MED6, MED7, MED8, MED9, MED10, MED11, MED12, MED13, MED13L, MED14, MED15, MED16, MED17, MED18, MED19, MED20, MED21, MED22, MED23, MED24, MED25, MED26, MED27, MED29, MED30, MED31, CCNC, CDK8 and CDC2L6/CDK11. The MED12, MED13, CCNC and CDK8 subunits form a distinct module termed the CDK8 module. Mediator containing the CDK8 module is less active than Mediator lacking this module in supporting transcriptional activation. Individual preparations of the Mediator complex lacking one or more distinct subunits have been variously termed ARC, CRSP, DRIP, PC2, SMCC and TRAP. Interacts with PPARG. Interacts with THRA in a ligand-dependent fashion.

Its subcellular location is the nucleus. Its function is as follows. Component of the Mediator complex, a coactivator involved in the regulated transcription of nearly all RNA polymerase II-dependent genes. Mediator functions as a bridge to convey information from gene-specific regulatory proteins to the basal RNA polymerase II transcription machinery. Mediator is recruited to promoters by direct interactions with regulatory proteins and serves as a scaffold for the assembly of a functional preinitiation complex with RNA polymerase II and the general transcription factors. The polypeptide is Mediator of RNA polymerase II transcription subunit 21 (MED21) (Pongo abelii (Sumatran orangutan)).